Here is a 134-residue protein sequence, read N- to C-terminus: Urease subunit beta (134 aa).

This sequence belongs to the urease beta subunit family. In terms of assembly, heterotrimer of UreA (gamma), UreB (beta) and UreC (alpha) subunits. Three heterotrimers associate to form the active enzyme.

It is found in the cytoplasm. The enzyme catalyses urea + 2 H2O + H(+) = hydrogencarbonate + 2 NH4(+). Its pathway is nitrogen metabolism; urea degradation; CO(2) and NH(3) from urea (urease route): step 1/1. The sequence is that of Urease subunit beta from Staphylococcus saprophyticus subsp. saprophyticus (strain ATCC 15305 / DSM 20229 / NCIMB 8711 / NCTC 7292 / S-41).